The sequence spans 316 residues: Taste receptor type 2 member 109 (316 aa).

The Extracellular portion of the chain corresponds to 1–14; it reads MEHLLKRTFDITEN. Residues 15–35 traverse the membrane as a helical segment; sequence ILLIILFIELIIGLIGNGFTA. Topologically, residues 36–62 are cytoplasmic; sequence LVHCMDWVKRKKMSLVNKILTALATSR. Residues 63-83 traverse the membrane as a helical segment; sequence IFLLWFMLVGFPISSLYPYLV. Over 84 to 94 the chain is Extracellular; the sequence is TTRLMIQFTST. The chain crosses the membrane as a helical span at residues 95-115; sequence LWTIANHISVWFATCLSVFYF. The Cytoplasmic portion of the chain corresponds to 116–135; that stretch reads LKIANFSNSPFLYLKRRVEK. Residues 136–156 traverse the membrane as a helical segment; the sequence is VVSVTLLVSLVLLFLNILLLN. The Extracellular segment spans residues 157 to 191; it reads LEINMCINEYHQINISYIFISYYHLSCQIQVLGSH. N170 is a glycosylation site (N-linked (GlcNAc...) asparagine). A helical transmembrane segment spans residues 192 to 212; the sequence is IIFLSVPVVLSLSTFLLLIFS. Residues 213 to 241 lie on the Cytoplasmic side of the membrane; it reads LWTLHKRMQQHVQGGRDARTTAHFKALQA. Residues 242 to 262 form a helical membrane-spanning segment; that stretch reads VIAFLLLYSIFILSLLLQFWI. Topologically, residues 263–270 are extracellular; that stretch reads HGLRKKPP. Residues 271–291 form a helical membrane-spanning segment; it reads FIAFCQVVDTAFPSFHSYVLI. Topologically, residues 292–316 are cytoplasmic; sequence LRDRKLRHASLSVLSWLKCRPNYVK.

The protein belongs to the G-protein coupled receptor T2R family.

The protein resides in the membrane. Putative taste receptor which may play a role in the perception of bitterness. The polypeptide is Taste receptor type 2 member 109 (Mus musculus (Mouse)).